A 198-amino-acid chain; its full sequence is Hookworm platelet inhibitor 1 (198 aa).

The signal sequence occupies residues 1–17 (MSSYLLVLVAILGFAYA). Intrachain disulfides connect cysteine 24/cysteine 65, cysteine 78/cysteine 146, cysteine 141/cysteine 154, cysteine 174/cysteine 186, and cysteine 177/cysteine 195.

Belongs to the CRISP family. As to quaternary structure, monomer. In terms of tissue distribution, detected in cephalic glands.

The protein localises to the secreted. In terms of biological role, hookworms inhibitor of platelet aggregation and adhesion. Native protein inhibits platelet aggregation induced by ADP, epinephrine, and thrombin. In addition, it prevents adhesion of resting platelets to immobilized fibrinogen and collagen. May act by binding to glycoprotein IIb/IIIa (ITGA2B/ITGB3) and integrin alpha-2/beta-1 (ITGA1/ITGB1), respectively. It is noteworthy that the recombinant protein fails to inhibit binding to fibrinogen (through ITGA2B/ITGB3) and collagen (through ITGA1/ITGB1). This is Hookworm platelet inhibitor 1 from Ancylostoma caninum (Dog hookworm).